A 104-amino-acid polypeptide reads, in one-letter code: N(2)-fixation sustaining protein CowN (104 aa).

Belongs to the CowN family.

In terms of biological role, is required to sustain N(2)-dependent growth in the presence of low levels of carbon monoxide (CO). Probably acts by protecting the N(2) fixation ability of the nitrogenase complex, which is inactivated in the presence of CO. The sequence is that of N(2)-fixation sustaining protein CowN from Arcobacter nitrofigilis (strain ATCC 33309 / DSM 7299 / CCUG 15893 / LMG 7604 / NCTC 12251 / CI) (Campylobacter nitrofigilis).